The chain runs to 169 residues: MTAVAAAPFSFKDFFKSFMLVELFKGMALTGRHAFRRKVTVQFPEEKTPLSPRFRGLHALRRYDNGEERCIACKLCEAVCPALAITIESELRADGSRRTTRYDIDLTKCIFCGFCEESCPVDSIVETHIFEYHGEKRGDLYFTKDMLLAVGDRYEAEIAAARAADAKYR.

4Fe-4S ferredoxin-type domains are found at residues 61–90 and 100–129; these read RRYD…IESE and TRYD…ETHI. Residues Cys-70, Cys-73, Cys-76, Cys-80, Cys-109, Cys-112, Cys-115, and Cys-119 each contribute to the [4Fe-4S] cluster site.

The protein belongs to the complex I 23 kDa subunit family. In terms of assembly, NDH-1 is composed of 14 different subunits. Subunits NuoA, H, J, K, L, M, N constitute the membrane sector of the complex. The cofactor is [4Fe-4S] cluster.

The protein localises to the cell inner membrane. It catalyses the reaction a quinone + NADH + 5 H(+)(in) = a quinol + NAD(+) + 4 H(+)(out). Functionally, NDH-1 shuttles electrons from NADH, via FMN and iron-sulfur (Fe-S) centers, to quinones in the respiratory chain. The immediate electron acceptor for the enzyme in this species is believed to be ubiquinone. Couples the redox reaction to proton translocation (for every two electrons transferred, four hydrogen ions are translocated across the cytoplasmic membrane), and thus conserves the redox energy in a proton gradient. This chain is NADH-quinone oxidoreductase subunit I, found in Verminephrobacter eiseniae (strain EF01-2).